The sequence spans 70 residues: Cold shock-like protein CspG (70 aa).

In terms of domain architecture, CSD spans G7–V67.

It is found in the cytoplasm. The sequence is that of Cold shock-like protein CspG (cspG) from Shewanella violacea (strain JCM 10179 / CIP 106290 / LMG 19151 / DSS12).